The sequence spans 258 residues: 5'-nucleotidase SurE (258 aa).

The a divalent metal cation site is built by Asp-8, Asp-9, Ser-40, and Asn-93.

The protein belongs to the SurE nucleotidase family. The cofactor is a divalent metal cation.

It localises to the cytoplasm. It catalyses the reaction a ribonucleoside 5'-phosphate + H2O = a ribonucleoside + phosphate. Functionally, nucleotidase that shows phosphatase activity on nucleoside 5'-monophosphates. This chain is 5'-nucleotidase SurE, found in Afipia carboxidovorans (strain ATCC 49405 / DSM 1227 / KCTC 32145 / OM5) (Oligotropha carboxidovorans).